The sequence spans 112 residues: Large ribosomal subunit protein P1 (112 aa).

Residues Pro71–Ala90 are compositionally biased toward low complexity. Residues Pro71–Asp112 are disordered. Basic and acidic residues predominate over residues Glu91–Gly100.

The protein belongs to the eukaryotic ribosomal protein P1/P2 family. As to quaternary structure, P1 and P2 exist as dimers at the large ribosomal subunit.

In terms of biological role, plays an important role in the elongation step of protein synthesis. This Oscheius tipulae protein is Large ribosomal subunit protein P1 (rpl-21).